A 144-amino-acid polypeptide reads, in one-letter code: Gastric inhibitory polypeptide (144 aa).

The first 21 residues, 1 to 21 (MVALKTCSLLLVLLFLAVGLG), serve as a signal peptide directing secretion. Propeptides lie at residues 22-42 (EKEEVEFRSHAKFAGPRPRGP) and 87-144 (EARA…LRSQ). The tract at residues 94-113 (AGQSQGKEDKEAQESSLPKS) is disordered.

It belongs to the glucagon family.

Its subcellular location is the secreted. Its function is as follows. Potent stimulator of insulin secretion and relatively poor inhibitor of gastric acid secretion. The chain is Gastric inhibitory polypeptide (Gip) from Mus musculus (Mouse).